The following is a 164-amino-acid chain: UPF0304 protein YfbU (164 aa).

The protein belongs to the UPF0304 family.

This is UPF0304 protein YfbU from Shigella flexneri.